A 409-amino-acid chain; its full sequence is Multidrug resistance protein MdtG (409 aa).

10 helical membrane passes run 16 to 36, 58 to 78, 92 to 112, 115 to 135, 146 to 166, 173 to 193, 224 to 244, 256 to 276, 291 to 311, and 379 to 399; these read LIVA…VMPF, IVFS…GGLA, LGMG…QFLI, ALLG…ATQV, TLST…GLLA, PVFF…LFCI, LFVT…ILTL, VAFI…LLSA, ILIT…YVQT, and AVFL…WNSL.

Belongs to the major facilitator superfamily. DHA1 family. MdtG (TC 2.A.1.2.20) subfamily.

The protein resides in the cell inner membrane. Functionally, confers resistance to fosfomycin and deoxycholate. This is Multidrug resistance protein MdtG from Escherichia coli O9:H4 (strain HS).